Consider the following 225-residue polypeptide: Cardiotrophin-like cytokine factor 1 (225 aa).

A signal peptide spans 1–27 (MDLRAGDSWGMLACLCTVLWHLPAVPA). Residue asparagine 29 is glycosylated (N-linked (GlcNAc...) asparagine).

Belongs to the IL-6 superfamily. In terms of assembly, forms a heteromeric complex with cardiotrophin-like cytokine CRLF1/CLF-1; the CRLF1-CLCF1 complex is a ligand for the ciliary neurotrophic factor receptor/CNTFR. The CRLF1-CLCF1 heterodimer binds SORL1 (via N-terminal ectodomain); within this complex, the interaction is mediated predominantly by the CRLF1 moiety. The tripartite signaling complex formed by CRLF1, CLCF1 and CNTFR also binds SORL1.

The protein localises to the secreted. Functionally, in complex with CRLF1, forms a heterodimeric neurotropic cytokine that plays a crucial role during neuronal development. Also stimulates B-cells. Binds to and activates the ILST/gp130 receptor. The protein is Cardiotrophin-like cytokine factor 1 (Clcf1) of Mus musculus (Mouse).